Here is a 95-residue protein sequence, read N- to C-terminus: Putative membrane protein insertion efficiency factor (95 aa).

The tract at residues 72-95 (FDPVPDAPTSPSPSSSCSCKGPHP) is disordered. A compositionally biased stretch (low complexity) spans 83–95 (SPSSSCSCKGPHP).

It belongs to the UPF0161 family.

It localises to the cell inner membrane. Its function is as follows. Could be involved in insertion of integral membrane proteins into the membrane. This Xanthomonas axonopodis pv. citri (strain 306) protein is Putative membrane protein insertion efficiency factor.